The sequence spans 138 residues: Large ribosomal subunit protein uL16 (138 aa).

This sequence belongs to the universal ribosomal protein uL16 family. Part of the 50S ribosomal subunit.

In terms of biological role, binds 23S rRNA and is also seen to make contacts with the A and possibly P site tRNAs. This is Large ribosomal subunit protein uL16 from Paramagnetospirillum magneticum (strain ATCC 700264 / AMB-1) (Magnetospirillum magneticum).